A 208-amino-acid polypeptide reads, in one-letter code: Myosin light chain 6B (208 aa).

The segment at 1-51 (MPPKKDVPVKKPAGPSISKPAAKPAAAGAPPAKTKAEPAVPQAPQKTQEPP) is disordered. Residues 10–40 (KKPAGPSISKPAAKPAAAGAPPAKTKAEPAV) show a composition bias toward low complexity. EF-hand domains follow at residues 64–99 (DQLEEFKEAFELFDRVGDGKILYSQCGDVMRALGQN), 141–176 (GTYEDYLEGFRVFDKEGNGKVMGAELRHVLTTLGEK), and 176–208 (KMTEEEVETVLAGHEDSNGCINYEAFLKHILSV).

As to quaternary structure, myosin is a hexamer of 2 heavy chains and 4 light chains.

Functionally, regulatory light chain of myosin. Does not bind calcium. The protein is Myosin light chain 6B (MYL6B) of Homo sapiens (Human).